A 697-amino-acid polypeptide reads, in one-letter code: Glycine--tRNA ligase beta subunit (697 aa).

This sequence belongs to the class-II aminoacyl-tRNA synthetase family. Tetramer of two alpha and two beta subunits.

It localises to the cytoplasm. It carries out the reaction tRNA(Gly) + glycine + ATP = glycyl-tRNA(Gly) + AMP + diphosphate. The sequence is that of Glycine--tRNA ligase beta subunit from Cereibacter sphaeroides (strain ATCC 17029 / ATH 2.4.9) (Rhodobacter sphaeroides).